The primary structure comprises 394 residues: Elongation factor Tu 1 (394 aa).

The tr-type G domain occupies 10-204 (KPHVNVGTIG…ALDTYIPEPA (195 aa)). The segment at 19 to 26 (GHVDHGKT) is G1. 19-26 (GHVDHGKT) provides a ligand contact to GTP. Position 26 (T26) interacts with Mg(2+). Residues 60–64 (GITIN) are G2. Residues 81 to 84 (DCPG) form a G3 region. GTP contacts are provided by residues 81–85 (DCPGH) and 136–139 (NKCD). A G4 region spans residues 136–139 (NKCD). Residues 174 to 176 (SAL) form a G5 region.

The protein belongs to the TRAFAC class translation factor GTPase superfamily. Classic translation factor GTPase family. EF-Tu/EF-1A subfamily. Monomer.

It localises to the cytoplasm. It catalyses the reaction GTP + H2O = GDP + phosphate + H(+). Its function is as follows. GTP hydrolase that promotes the GTP-dependent binding of aminoacyl-tRNA to the A-site of ribosomes during protein biosynthesis. This chain is Elongation factor Tu 1, found in Shewanella frigidimarina (strain NCIMB 400).